Consider the following 98-residue polypeptide: NADH-ubiquinone oxidoreductase chain 4L (98 aa).

Helical transmembrane passes span 1–21 (MSLV…GLLM), 29–49 (SLLC…LMIL), and 61–81 (IILL…LVMV).

The protein belongs to the complex I subunit 4L family. Core subunit of respiratory chain NADH dehydrogenase (Complex I) which is composed of 45 different subunits.

It localises to the mitochondrion inner membrane. The catalysed reaction is a ubiquinone + NADH + 5 H(+)(in) = a ubiquinol + NAD(+) + 4 H(+)(out). Core subunit of the mitochondrial membrane respiratory chain NADH dehydrogenase (Complex I) which catalyzes electron transfer from NADH through the respiratory chain, using ubiquinone as an electron acceptor. Part of the enzyme membrane arm which is embedded in the lipid bilayer and involved in proton translocation. The polypeptide is NADH-ubiquinone oxidoreductase chain 4L (MT-ND4L) (Pantholops hodgsonii (Chiru)).